The primary structure comprises 107 residues: Anti-adapter protein IraM (107 aa).

It belongs to the IraM/RssC family.

It is found in the cytoplasm. In terms of biological role, inhibits RpoS proteolysis by regulating RssB activity, thereby increasing the stability of the sigma stress factor RpoS during magnesium starvation. This chain is Anti-adapter protein IraM, found in Escherichia coli (strain K12 / MC4100 / BW2952).